A 455-amino-acid chain; its full sequence is Elongation factor Tu, mitochondrial (455 aa).

Residues methionine 1–leucine 46 constitute a mitochondrion transit peptide. The tr-type G domain maps to lysine 58–alanine 254. The G1 stretch occupies residues glycine 67–threonine 74. Positions 70, 72, 73, 74, and 75 each coordinate GTP. A Mg(2+)-binding site is contributed by threonine 74. At lysine 82 the chain carries N6-acetyllysine. Lysine 91 is subject to N6-acetyllysine; alternate. Lysine 91 carries the N6-succinyllysine; alternate modification. The interval glycine 108–asparagine 112 is G2. The interval aspartate 129–glycine 132 is G3. The GTP site is built by asparagine 184, aspartate 187, serine 222, alanine 223, and leucine 224. A G4 region spans residues asparagine 184–aspartate 187. Residues serine 222–leucine 224 form a G5 region. Residue lysine 237 is modified to N6-succinyllysine. Residue lysine 259 is modified to N6-acetyllysine. The residue at position 281 (threonine 281) is a Phosphothreonine. Lysine 289 is modified (N6-succinyllysine). A Phosphoserine modification is found at serine 315. N6-acetyllysine is present on residues lysine 364 and lysine 421.

It belongs to the TRAFAC class translation factor GTPase superfamily. Classic translation factor GTPase family. EF-Tu/EF-1A subfamily. In terms of assembly, interacts with NLRX1. Interacts with ATG16L1. As to quaternary structure, (Microbial infection) Interacts with human parainfluenza virus 3 matrix protein; this interaction inhibits RLR-mediated type I interferon production while promoting autophagy. (Microbial infection) Interacts with Hantaan hantavirus glycoprotein N; this interaction contributes to the virus-induced degradation of mitochondria by autophagy, which leads to degradation of MAVS and inhibition of type I interferon (IFN) responses.

It localises to the mitochondrion. It catalyses the reaction GTP + H2O = GDP + phosphate + H(+). GTP hydrolase that promotes the GTP-dependent binding of aminoacyl-tRNA to the A-site of ribosomes during protein biosynthesis. Also plays a role in the regulation of autophagy and innate immunity. Recruits ATG5-ATG12 and NLRX1 at mitochondria and serves as a checkpoint of the RIGI-MAVS pathway. In turn, inhibits RLR-mediated type I interferon while promoting autophagy. In Homo sapiens (Human), this protein is Elongation factor Tu, mitochondrial (TUFM).